We begin with the raw amino-acid sequence, 478 residues long: Lipoprotein lipase (478 aa).

The signal sequence occupies residues 1–28 (MESKALLLLALSVCLQSLTVSRGGLVAA). Residues 35-56 (KDFRDIESKFALRTPEDTAEDT) form an interaction with GPIHBP1 region. A disulfide bridge links Cys57 with Cys70. N-linked (GlcNAc...) asparagine glycosylation occurs at Asn73. Tyr124 is modified (3'-nitrotyrosine). Ser162 serves as the catalytic Nucleophile. The active-site Charge relay system is the Asp186. A 3'-nitrotyrosine modification is found at Tyr194. Ca(2+) contacts are provided by Ala197, Arg200, Ser202, and Asp205. Residues Cys246 and Cys269 are joined by a disulfide bond. Positions 246 to 269 (CNIGEALRVIAERGLGDVDQLVKC) are essential for determining substrate specificity. His271 functions as the Charge relay system in the catalytic mechanism. Residue Asn287 is glycosylated (N-linked (GlcNAc...) asparagine). 2 disulfides stabilise this stretch: Cys294–Cys313 and Cys305–Cys308. The 124-residue stretch at 344 to 467 (FHYQVKIHFS…KGKSPVIFVK (124 aa)) folds into the PLAT domain. Tyr346 carries the post-translational modification 3'-nitrotyrosine. The N-linked (GlcNAc...) asparagine glycan is linked to Asn389. The interval 420 to 424 (WSNWW) is important for interaction with lipoprotein particles. The interval 433–437 (KIRVK) is important for heparin binding. The interaction with GPIHBP1 stretch occupies residues 446-470 (IFCSREKMSYLQKGKSPVIFVKCHD). An intrachain disulfide couples Cys448 to Cys468.

This sequence belongs to the AB hydrolase superfamily. Lipase family. Homodimer. Interacts with GPIHBP1 with 1:1 stoichiometry. Interacts with APOC2; the interaction activates LPL activity in the presence of lipids. Interaction with heparan sulfate proteoglycans is required to protect LPL against loss of activity. Associates with lipoprotein particles in blood plasma. Interacts with LMF1 and SEL1L; interaction with SEL1L is required to prevent aggregation of newly synthesized LPL in the endoplasmic reticulum (ER), and for normal export of LPL from the ER to the extracellular space. Interacts with SORL1; SORL1 acts as a sorting receptor, promoting LPL localization to endosomes and later to lysosomes, leading to degradation of newly synthesized LPL. Post-translationally, tyrosine nitration after lipopolysaccharide (LPS) challenge down-regulates the lipase activity. As to expression, detected in milk (at protein level).

The protein localises to the cell membrane. The protein resides in the secreted. Its subcellular location is the extracellular space. It is found in the extracellular matrix. The catalysed reaction is a triacylglycerol + H2O = a diacylglycerol + a fatty acid + H(+). The enzyme catalyses a 1,2-diacyl-sn-glycero-3-phosphocholine + H2O = a 2-acyl-sn-glycero-3-phosphocholine + a fatty acid + H(+). It catalyses the reaction 1,2,3-tri-(9Z-octadecenoyl)-glycerol + H2O = di-(9Z)-octadecenoylglycerol + (9Z)-octadecenoate + H(+). It carries out the reaction 1,2-di-(9Z-octadecenoyl)-sn-glycero-3-phosphocholine + H2O = (9Z-octadecenoyl)-sn-glycero-3-phosphocholine + (9Z)-octadecenoate + H(+). The catalysed reaction is 1,2,3-tributanoylglycerol + H2O = dibutanoylglycerol + butanoate + H(+). The enzyme catalyses 1,2-dihexadecanoyl-sn-glycero-3-phosphocholine + H2O = hexadecanoyl-sn-glycero-3-phosphocholine + hexadecanoate + H(+). The apolipoprotein APOC2 acts as a coactivator of LPL activity. Ca(2+) binding promotes protein stability and formation of the active homodimer. Interaction with GPIHBP1 protects LPL against inactivation by ANGPTL4. Its function is as follows. Key enzyme in triglyceride metabolism. Catalyzes the hydrolysis of triglycerides from circulating chylomicrons and very low density lipoproteins (VLDL), and thereby plays an important role in lipid clearance from the blood stream, lipid utilization and storage. Although it has both phospholipase and triglyceride lipase activities it is primarily a triglyceride lipase with low but detectable phospholipase activity. Mediates margination of triglyceride-rich lipoprotein particles in capillaries. Recruited to its site of action on the luminal surface of vascular endothelium by binding to GPIHBP1 and cell surface heparan sulfate proteoglycans. The protein is Lipoprotein lipase (LPL) of Bos taurus (Bovine).